The primary structure comprises 162 residues: Sorting nexin-3 (162 aa).

Alanine 2 is subject to N-acetylalanine. A PX domain is found at asparagine 27–aspartate 151. Arginine 43 is modified (omega-N-methylarginine). The a 1,2-diacyl-sn-glycero-3-phospho-(1D-myo-inositol-3-phosphate) site is built by arginine 70, serine 72, lysine 95, and arginine 118. Position 72 is a phosphoserine (serine 72). Residue lysine 95 forms a Glycyl lysine isopeptide (Lys-Gly) (interchain with G-Cter in SUMO2) linkage. The tract at residues aspartate 147 to alanine 162 is binds predominantly to PtdIns(P5) and weaker to PtdIns(P3) abd PtdIns(P4); involved in neurite outgrowth regulation.

It belongs to the sorting nexin family. In terms of assembly, interacts with VPS26A, VPS29. Interacts with VPS35; the interaction with VPS35 is direct. The association with the retromer CSC subcomplex subunits is proposed to represent a functional distinct retromer variant described as SNX3-retromer complex. Interacts with USP10 and SCNN1A. Interacts with TRFC. Interacts with SNX8; 2 molecules of SNX8 seems to associate with one molecule of SNX3. Interacts with PTPRU. Interacts with MON2 and DOP1B. In terms of processing, ubiquitinated, leading to its proteasomal degradation. Deubiquitinated by USP10. As to expression, highly expressed in developing red cells and hematopoietic tissues.

It is found in the early endosome. Its subcellular location is the cytoplasmic vesicle. It localises to the phagosome. In terms of biological role, phosphoinositide-binding protein required for multivesicular body formation. Specifically binds phosphatidylinositol 3-phosphate (PtdIns(P3)). Can also bind phosphatidylinositol 4-phosphate (PtdIns(P4)), phosphatidylinositol 5-phosphate (PtdIns(P5)) and phosphatidylinositol 3,5-biphosphate (PtdIns(3,5)P2). Plays a role in protein transport between cellular compartments. Together with RAB7A facilitates endosome membrane association of the retromer cargo-selective subcomplex (CSC). May act in part as component of the SNX3-retromer complex which mediates the retrograde endosome-to-TGN transport of WLS distinct from the SNX-BAR retromer pathway. Promotes stability and cell surface expression of epithelial sodium channel (ENAC) subunits SCNN1A and SCNN1G. Not involved in EGFR degradation. Involved in the regulation of phagocytosis in dendritic cells possibly by regulating EEA1 recruitment to the nascent phagosomes. Involved in iron homeostasis through regulation of endocytic recycling of the transferrin receptor Tfrc presuambly by delivering the transferrin:transferrin receptor complex to recycling endosomes; the function may involve the CSC retromer subcomplex. Involved in regulation of neurite outgrowth in primary neurons. This is Sorting nexin-3 (Snx3) from Mus musculus (Mouse).